A 359-amino-acid chain; its full sequence is 4-hydroxy-3-methylbut-2-en-1-yl diphosphate synthase (flavodoxin) (359 aa).

Residues Cys-264, Cys-267, Cys-299, and Glu-306 each contribute to the [4Fe-4S] cluster site.

Belongs to the IspG family. [4Fe-4S] cluster serves as cofactor.

It carries out the reaction (2E)-4-hydroxy-3-methylbut-2-enyl diphosphate + oxidized [flavodoxin] + H2O + 2 H(+) = 2-C-methyl-D-erythritol 2,4-cyclic diphosphate + reduced [flavodoxin]. The protein operates within isoprenoid biosynthesis; isopentenyl diphosphate biosynthesis via DXP pathway; isopentenyl diphosphate from 1-deoxy-D-xylulose 5-phosphate: step 5/6. Functionally, converts 2C-methyl-D-erythritol 2,4-cyclodiphosphate (ME-2,4cPP) into 1-hydroxy-2-methyl-2-(E)-butenyl 4-diphosphate. The chain is 4-hydroxy-3-methylbut-2-en-1-yl diphosphate synthase (flavodoxin) from Helicobacter pylori (strain ATCC 700392 / 26695) (Campylobacter pylori).